We begin with the raw amino-acid sequence, 242 residues long: ATP synthase subunit a (242 aa).

A run of 6 helical transmembrane segments spans residues 29-49, 84-104, 114-134, 140-160, 181-201, and 203-223; these read SSIYMLLASTLALTYFYLAFY, FIPLVFSLFIFILFCNLLGMT, IIVTFTLALLIFLTVTIVGFI, FLTLFLPQGTPVWLAPLMIVI, MAGHVLLKVIAGFTVSLMIYL, and FLPIPLIVILIGFEIFVAILQ.

Belongs to the ATPase A chain family. F-type ATPases have 2 components, CF(1) - the catalytic core - and CF(0) - the membrane proton channel. CF(1) has five subunits: alpha(3), beta(3), gamma(1), delta(1), epsilon(1). CF(0) has three main subunits: a(1), b(2) and c(9-12). The alpha and beta chains form an alternating ring which encloses part of the gamma chain. CF(1) is attached to CF(0) by a central stalk formed by the gamma and epsilon chains, while a peripheral stalk is formed by the delta and b chains.

The protein localises to the cell inner membrane. Functionally, key component of the proton channel; it plays a direct role in the translocation of protons across the membrane. This chain is ATP synthase subunit a, found in Rickettsia typhi (strain ATCC VR-144 / Wilmington).